The sequence spans 340 residues: Probable protein phosphatase 2C 21 (340 aa).

Residues 1 to 21 (MGASPSRPLEQSPSSSEGENH) are disordered. Residues 24–305 (KYASYTTQGF…DNATAILVKF (282 aa)) form the PPM-type phosphatase domain. 4 residues coordinate Mn(2+): D58, G59, D254, and D296. A disordered region spans residues 311–340 (DPDEVASARDEHQHNPEGGDEKLDINNDND). The segment covering 316-340 (ASARDEHQHNPEGGDEKLDINNDND) has biased composition (basic and acidic residues).

This sequence belongs to the PP2C family. The cofactor is Mg(2+). Requires Mn(2+) as cofactor.

The enzyme catalyses O-phospho-L-seryl-[protein] + H2O = L-seryl-[protein] + phosphate. The catalysed reaction is O-phospho-L-threonyl-[protein] + H2O = L-threonyl-[protein] + phosphate. The chain is Probable protein phosphatase 2C 21 from Oryza sativa subsp. japonica (Rice).